Consider the following 115-residue polypeptide: NADH-ubiquinone oxidoreductase chain 3 (115 aa).

Transmembrane regions (helical) follow at residues 4-24 (LTAL…AFWL), 55-75 (FFLV…LLPL), and 86-106 (VMML…AYEW).

The protein belongs to the complex I subunit 3 family. As to quaternary structure, core subunit of respiratory chain NADH dehydrogenase (Complex I) which is composed of 45 different subunits. Interacts with TMEM186. Interacts with TMEM242.

Its subcellular location is the mitochondrion inner membrane. It catalyses the reaction a ubiquinone + NADH + 5 H(+)(in) = a ubiquinol + NAD(+) + 4 H(+)(out). In terms of biological role, core subunit of the mitochondrial membrane respiratory chain NADH dehydrogenase (Complex I) which catalyzes electron transfer from NADH through the respiratory chain, using ubiquinone as an electron acceptor. Essential for the catalytic activity of complex I. In Isthmomys pirrensis (Mount Pirri Isthmus rat), this protein is NADH-ubiquinone oxidoreductase chain 3.